A 266-amino-acid chain; its full sequence is uncharacterized protein (266 aa).

This sequence belongs to the ascovirus HvAV ORF59 family.

This is an uncharacterized protein from Trichoplusia ni ascovirus 2c (TnAV-2c).